Consider the following 396-residue polypeptide: MPTFRTLDEADLAGKRVLVRVDLNVPMDEGRVTDDTRIQAILPTIRAITEKGGKAILLSHFGRPKGRDASQSLAPVAAAVGERLGAPVAFAGDCIGSDAEAAVSTLAPGAVLVLENTRFHAGEEKNAADFVQQLAALGDIYVNDAFSAAHRAHASTEGLAHKLPAFAGRSMQKELEALAKALEAPQRPVLAVVGGAKVSSKLELLGNLTAKVDILVIGGGMANTFLAAKGVKVGKSLCEHDLADTARQIIATAASHGCEIVLPVDAVVTKTFAAHADHRVVPVDQVAEDEMILDAGPATVALVREKLKGAKTVVWNGPFGAFELPPFDAATVAVAKAVAEATKAGALLSVAGGGDTVAALNHAGAAGDFSYVSTAGGAFLEWLEGKQLPGVEALRR.

Substrate-binding positions include 22–24 (DLN), Arg37, 60–63 (HFGR), Arg118, and Arg151. Residues Lys201, Glu323, and 353 to 356 (GGDT) contribute to the ATP site.

This sequence belongs to the phosphoglycerate kinase family. As to quaternary structure, monomer.

It is found in the cytoplasm. It catalyses the reaction (2R)-3-phosphoglycerate + ATP = (2R)-3-phospho-glyceroyl phosphate + ADP. It participates in carbohydrate degradation; glycolysis; pyruvate from D-glyceraldehyde 3-phosphate: step 2/5. In Azorhizobium caulinodans (strain ATCC 43989 / DSM 5975 / JCM 20966 / LMG 6465 / NBRC 14845 / NCIMB 13405 / ORS 571), this protein is Phosphoglycerate kinase.